The primary structure comprises 912 residues: Protein translocase subunit SecA (912 aa).

Residues Gln-87, 105–109 (GEGKT), and Asp-509 contribute to the ATP site. Basic and acidic residues predominate over residues 847–859 (RERAVSQPVHEDA). The interval 847–912 (RERAVSQPVH…KYKHCHGKLN (66 aa)) is disordered. Over residues 867–878 (AESEEASGESAD) the composition is skewed to acidic residues. A compositionally biased stretch (basic and acidic residues) spans 881-892 (QPVRRDGPKVGR). 4 residues coordinate Zn(2+): Cys-896, Cys-898, Cys-907, and His-908. The segment covering 902–912 (KKYKHCHGKLN) has biased composition (basic residues).

This sequence belongs to the SecA family. Monomer and homodimer. Part of the essential Sec protein translocation apparatus which comprises SecA, SecYEG and auxiliary proteins SecDF-YajC and YidC. Zn(2+) is required as a cofactor.

It is found in the cell inner membrane. The protein localises to the cytoplasm. It carries out the reaction ATP + H2O + cellular proteinSide 1 = ADP + phosphate + cellular proteinSide 2.. In terms of biological role, part of the Sec protein translocase complex. Interacts with the SecYEG preprotein conducting channel. Has a central role in coupling the hydrolysis of ATP to the transfer of proteins into and across the cell membrane, serving both as a receptor for the preprotein-SecB complex and as an ATP-driven molecular motor driving the stepwise translocation of polypeptide chains across the membrane. This chain is Protein translocase subunit SecA, found in Chromohalobacter salexigens (strain ATCC BAA-138 / DSM 3043 / CIP 106854 / NCIMB 13768 / 1H11).